We begin with the raw amino-acid sequence, 465 residues long: Iron-sulfur cluster assembly SufBD family protein SAUSA300_0822 (465 aa).

It belongs to the iron-sulfur cluster assembly SufBD family.

The sequence is that of Iron-sulfur cluster assembly SufBD family protein SAUSA300_0822 from Staphylococcus aureus (strain USA300).